A 428-amino-acid chain; its full sequence is Serine--tRNA ligase (428 aa).

An L-serine-binding site is contributed by 231 to 233 (TAE). Residue 262-264 (RSE) coordinates ATP. An L-serine-binding site is contributed by Glu285. 349–352 (EISS) is a binding site for ATP. An L-serine-binding site is contributed by Ser385.

Belongs to the class-II aminoacyl-tRNA synthetase family. Type-1 seryl-tRNA synthetase subfamily. As to quaternary structure, homodimer. The tRNA molecule binds across the dimer.

It localises to the cytoplasm. It catalyses the reaction tRNA(Ser) + L-serine + ATP = L-seryl-tRNA(Ser) + AMP + diphosphate + H(+). The enzyme catalyses tRNA(Sec) + L-serine + ATP = L-seryl-tRNA(Sec) + AMP + diphosphate + H(+). It functions in the pathway aminoacyl-tRNA biosynthesis; selenocysteinyl-tRNA(Sec) biosynthesis; L-seryl-tRNA(Sec) from L-serine and tRNA(Sec): step 1/1. Functionally, catalyzes the attachment of serine to tRNA(Ser). Is also able to aminoacylate tRNA(Sec) with serine, to form the misacylated tRNA L-seryl-tRNA(Sec), which will be further converted into selenocysteinyl-tRNA(Sec). The polypeptide is Serine--tRNA ligase (Staphylococcus aureus (strain bovine RF122 / ET3-1)).